We begin with the raw amino-acid sequence, 536 residues long: Sensory rhodopsin I transducer (536 aa).

Over 2 to 14 the chain is Cytoplasmic; the sequence is TIAWARRRYGVKL. A helical transmembrane segment spans residues 15 to 29; the sequence is GLGYIATAGLLVGVG. Topologically, residues 30 to 39 are extracellular; it reads VTTNDVPSTI. A helical transmembrane segment spans residues 40–55; it reads VAGIAGLLTLGSINAA. The HAMP 1 domain occupies 55–107; sequence AETVASIKEIAAQTERVANGNLEQEVTSTRTDEFGSLADSIEQMRQSLRGRLN. At 56–536 the chain is on the cytoplasmic side; the sequence is ETVASIKEIA…MRAGADGGGA (481 aa). The disordered stretch occupies residues 116–145; sequence LEETQAEAETAREEAEQAKQEAQAAEREAR. A compositionally biased stretch (basic and acidic residues) spans 124–145; it reads ETAREEAEQAKQEAQAAEREAR. Residues 149–202 form the HAMP 2 domain; it reads ATYQDTAKRYGETMEAAATGDLTQRVDVDTDHEAMETVGTAFNQMMDDLQATVR. The 239-residue stretch at 221–459 folds into the Methyl-accepting transducer domain; sequence TSADIEASAG…STATSVERVA (239 aa). E266 is subject to Glutamate methyl ester (Glu). Residues 278 to 307 form a disordered region; that stretch reads SEDVATASDAARDSSKSALDEMSSIETEVD. Over residues 287–296 the composition is skewed to basic and acidic residues; it reads AARDSSKSAL. Position 473 is a glutamate methyl ester (Glu) (E473). Residues 512–536 are disordered; sequence TEDSETAGGSVEQPVMRAGADGGGA.

The protein belongs to the methyl-accepting chemotaxis (MCP) protein family. Methylated by CheR.

The protein resides in the cell membrane. Its function is as follows. Transduces signals from the phototaxis receptor sensory rhodopsin I (SR-I) to the flagellar motor. Responds to light changes through the variation of the level of methylation. This is Sensory rhodopsin I transducer (htr1) from Halobacterium salinarum (strain ATCC 29341 / DSM 671 / R1).